A 296-amino-acid polypeptide reads, in one-letter code: 4-hydroxy-tetrahydrodipicolinate synthase (296 aa).

A pyruvate-binding site is contributed by threonine 49. Residue tyrosine 137 is the Proton donor/acceptor of the active site. Catalysis depends on lysine 166, which acts as the Schiff-base intermediate with substrate. Isoleucine 208 provides a ligand contact to pyruvate.

This sequence belongs to the DapA family. In terms of assembly, homotetramer; dimer of dimers.

It localises to the cytoplasm. The catalysed reaction is L-aspartate 4-semialdehyde + pyruvate = (2S,4S)-4-hydroxy-2,3,4,5-tetrahydrodipicolinate + H2O + H(+). The protein operates within amino-acid biosynthesis; L-lysine biosynthesis via DAP pathway; (S)-tetrahydrodipicolinate from L-aspartate: step 3/4. Its function is as follows. Catalyzes the condensation of (S)-aspartate-beta-semialdehyde [(S)-ASA] and pyruvate to 4-hydroxy-tetrahydrodipicolinate (HTPA). The sequence is that of 4-hydroxy-tetrahydrodipicolinate synthase from Chlorobium phaeovibrioides (strain DSM 265 / 1930) (Prosthecochloris vibrioformis (strain DSM 265)).